The following is a 224-amino-acid chain: MAARSLWAVQRLQRLLASGAMSESRGWLHPFSTATQRTAGEDCSSEDPPDGLGPSLAEQALRLKAVKLEKEVQDLTLRYQRAVADCENIRRRTQRCVEDAKIFGIQSFCKDLVEVADILEKTAKCCSEGAEPEDHRRTLEKVFQGLSLLEARLKSVFTKHGLEKMTPIGDKYDPHEHELICHMPAGVGVQPGTVALVRQDGYKLHGRTIRLAQVEVAVESQRRL.

The N-terminal 31 residues, 1-31 (MAARSLWAVQRLQRLLASGAMSESRGWLHPF), are a transit peptide targeting the mitochondrion. At K141 the chain carries N6-acetyllysine.

The protein belongs to the GrpE family. Probable component of the PAM complex at least composed of a mitochondrial HSP70 protein, GRPEL1 or GRPEL2, TIMM44, TIMM16/PAM16 and TIMM14/DNAJC19. In terms of tissue distribution, ubiquitous.

The protein resides in the mitochondrion matrix. Functionally, essential component of the PAM complex, a complex required for the translocation of transit peptide-containing proteins from the inner membrane into the mitochondrial matrix in an ATP-dependent manner. Seems to control the nucleotide-dependent binding of mitochondrial HSP70 to substrate proteins. Stimulates ATPase activity of mt-HSP70. May also serve to modulate the interconversion of oligomeric (inactive) and monomeric (active) forms of mt-HSP70. The chain is GrpE protein homolog 2, mitochondrial (Grpel2) from Mus musculus (Mouse).